The sequence spans 220 residues: Cytidylate kinase (220 aa).

10–18 provides a ligand contact to ATP; sequence GPASSGKST.

This sequence belongs to the cytidylate kinase family. Type 1 subfamily.

It localises to the cytoplasm. It carries out the reaction CMP + ATP = CDP + ADP. The catalysed reaction is dCMP + ATP = dCDP + ADP. This is Cytidylate kinase from Lactococcus lactis subsp. cremoris (strain MG1363).